Consider the following 382-residue polypeptide: MEARRARQKALKVKNLKDVRYMKLISMETSSSSDDSCDSFASDNFANTRLQLNREGCRTRSQCRHSGPLRVAMKFPARNTRRAASKKAAPPKPSESSANDSHSDSEEEEEEEEEEDGMNFLEKRALNIKQNKAMLAKLMSELESFPGLFSGRHSLPGHRAKDSKSPRRRTFPGVATRRNPERRTRPLTRSRSRILGSLGALPTEEEEEEEEEEEDKYMLVRQRKSMDSYMNDDDVPRSRRPGSMTLPHIIRPVEEVTEEEIRNICSNSREKIYNRSLGSTCHQCRQKTTDTKTNCRNPDCWGIRGQFCGPCLRNRYGEEVKDALLDPNWHCPPCRGICNCSFCRQRDGRCATGVLVYLAKYHGFGNVHAYLKSLKQEFEMQA.

Disordered regions lie at residues 68-118 and 151-217; these read PLRV…EDGM and GRHS…EDKY. A compositionally biased stretch (acidic residues) spans 105 to 117; the sequence is SEEEEEEEEEEDG. Positions 152–177 are interaction with MYC; sequence RHSLPGHRAKDSKSPRRRTFPGVATR. The short motif at 167-183 is the Nuclear localization signal element; the sequence is RRRTFPGVATRRNPERR. T170 bears the Phosphothreonine mark. S197 bears the Phosphoserine mark. T203 carries the post-translational modification Phosphothreonine. The span at 203 to 215 shows a compositional bias: acidic residues; sequence TEEEEEEEEEEED. Residue K216 forms a Glycyl lysine isopeptide (Lys-Gly) (interchain with G-Cter in SUMO2) linkage. Phosphoserine is present on S225. The interval 258–382 is mediates transcriptional activity; the sequence is EEEIRNICSN…SLKQEFEMQA (125 aa).

In terms of assembly, interacts with MYC (via C-terminus), YWHAE and YWHAZ. Post-translationally, phosphorylation at Thr-170 promotes interaction with YWHAE and YWHAZ, dissociation from MYC and sequestration in the cytoplasm.

It is found in the nucleus. The protein localises to the cytoplasm. In terms of biological role, participates in MYC-mediated cell transformation and apoptosis; induces anchorage-independent growth and clonogenicity in lymphoblastoid cells. Insufficient to induce tumorigenicity when overexpressed but contributes to MYC-mediated tumorigenesis. May play a role as transcriptional regulator. The sequence is that of Cell division cycle-associated protein 7 (Cdca7) from Mus musculus (Mouse).